The following is a 259-amino-acid chain: uncharacterized protein (259 aa).

It belongs to the ParA family.

This is an uncharacterized protein from Methanocaldococcus jannaschii (strain ATCC 43067 / DSM 2661 / JAL-1 / JCM 10045 / NBRC 100440) (Methanococcus jannaschii).